An 836-amino-acid polypeptide reads, in one-letter code: General vesicular transport factor p115 (836 aa).

The tract at residues 1–22 (MEFLKSGIKTVLGSTEPGQQPS) is disordered. Polar residues predominate over residues 12–22 (LGSTEPGQQPS). ARM repeat units lie at residues 24–64 (AETV…VGAQ), 65–124 (GMPP…IKTP), 126–166 (HVTL…LILV), 169–210 (MGVS…VAFE), 211–256 (NAFD…FKEG), 316–359 (RLLH…LGRV), 368–413 (PAIV…QTLL), 424–463 (STGQ…EELL), 477–518 (TLLE…KALL), 523–577 (TMAY…IIKR), and 579–636 (GQES…LVSG). Coiled coils occupy residues 663-707 (IIRG…DQNT) and 744-806 (NMYF…EEAG). A disordered region spans residues 803 to 836 (EEAGSTNTLPTSNVAPSVPAAGGGSPIPSGTASR). Residues 806–816 (GSTNTLPTSNV) are compositionally biased toward polar residues. The segment covering 817–836 (APSVPAAGGGSPIPSGTASR) has biased composition (low complexity).

The protein belongs to the VDP/USO1/EDE1 family.

Its subcellular location is the cytoplasm. It is found in the golgi apparatus. The protein localises to the golgi stack. The protein resides in the golgi stack membrane. It localises to the endoplasmic reticulum. Its subcellular location is the endoplasmic reticulum membrane. Essential for maintaining the architecture of the Golgi stacks and for normal organization of the transitional endoplasmic reticulum (tER). Required for both the formation of the Golgi stacks and the maintenance of the individual cisternae. The chain is General vesicular transport factor p115 from Drosophila melanogaster (Fruit fly).